A 1006-amino-acid polypeptide reads, in one-letter code: GATA zinc finger domain-containing protein 7 (1006 aa).

Low complexity predominate over residues 55-70 (SSSNNFINNHHNNQSS). Disordered stretches follow at residues 55–116 (SSSN…APNL), 128–248 (PFQN…DPFY), 381–499 (NAKK…PLST), 528–638 (STSG…SSNS), and 657–800 (YNSN…NYHD). A compositionally biased stretch (polar residues) spans 71–86 (DIHSISQSTPNLSTLI). Low complexity-rich tracts occupy residues 87–110 (SSSSNNNNNNNNNNSPNYSMNSSS) and 128–158 (PFQNQQQQQPTSEVSTNSANTSSENTTCNNS). The segment covering 159 to 168 (PVSSSTNYIP) has biased composition (polar residues). The segment covering 169–180 (NNSTSNVVLNSS) has biased composition (low complexity). Residues 181–190 (IPTTSPNVLS) are compositionally biased toward polar residues. Composition is skewed to low complexity over residues 205-241 (NNNNINNNNINNNINNNNNNNNNNNNNNNNNNNNNNN) and 388-410 (TNTNNNNNNNNNNNNNNNNNNNN). Polar residues predominate over residues 411–426 (IQQANVNTSPISTSTT). Composition is skewed to low complexity over residues 427–456 (PNNNNNNQIQNQPQQIPQQQAQQQAQQQAQ) and 468–496 (SITPSISLTPTTVTSSSSTNSSGSIGASP). The span at 528–539 (STSGMLSTTNPY) shows a compositional bias: polar residues. Over residues 540 to 557 (THHSPNTSSTVSSSVTSP) the composition is skewed to low complexity. The segment covering 558-589 (LINQYGTNPTLTNNHSFYGSLASNQNTGASDG) has biased composition (polar residues). Composition is skewed to low complexity over residues 590 to 601 (NNNNNNNNNNNN) and 619 to 638 (SSNPLNNNHNSNNVYNSSNS). Residues 662 to 680 (GSGMTTPQSLGHSPSHNDY) show a composition bias toward polar residues. 2 stretches are compositionally biased toward low complexity: residues 681-706 (NSNNNNNNNNNNNSNNNNSNNSNSNN) and 713-785 (SNSS…SSNN). Residues 842-867 (CHNCGTKNTPEWRRGPSGPATLCNAC) form a GATA-type zinc finger. The interval 925–957 (NNASSSSSSSSSSSSSSSSSSSTSSYSSSSYNI) is disordered. Low complexity predominate over residues 928–954 (SSSSSSSSSSSSSSSSSSSTSSYSSSS).

This chain is GATA zinc finger domain-containing protein 7 (gtaG), found in Dictyostelium discoideum (Social amoeba).